Here is a 335-residue protein sequence, read N- to C-terminus: Beta-ketoacyl-[acyl-carrier-protein] synthase III (335 aa).

Active-site residues include Cys-118 and His-259. Positions 260–264 (QANER) are ACP-binding. Asn-289 is a catalytic residue.

The protein belongs to the thiolase-like superfamily. FabH family. As to quaternary structure, homodimer.

Its subcellular location is the cytoplasm. It carries out the reaction malonyl-[ACP] + acetyl-CoA + H(+) = 3-oxobutanoyl-[ACP] + CO2 + CoA. It functions in the pathway lipid metabolism; fatty acid biosynthesis. In terms of biological role, catalyzes the condensation reaction of fatty acid synthesis by the addition to an acyl acceptor of two carbons from malonyl-ACP. Catalyzes the first condensation reaction which initiates fatty acid synthesis and may therefore play a role in governing the total rate of fatty acid production. Possesses both acetoacetyl-ACP synthase and acetyl transacylase activities. Its substrate specificity determines the biosynthesis of branched-chain and/or straight-chain of fatty acids. This Chlamydia caviae (strain ATCC VR-813 / DSM 19441 / 03DC25 / GPIC) (Chlamydophila caviae) protein is Beta-ketoacyl-[acyl-carrier-protein] synthase III.